The chain runs to 583 residues: Membrane protein insertase YidC (583 aa).

The helical transmembrane segment at 5-25 (SVTGLALIALIMIVWLQFMSP) threads the bilayer. Residues 28–50 (KSVQPDNRPKAQTTATVSQEKTE) are disordered. Polar residues predominate over residues 37-46 (KAQTTATVSQ). 5 consecutive transmembrane segments (helical) span residues 341 to 361 (PFAE…ISNY), 362 to 382 (GLII…LSMA), 427 to 447 (LGGC…FYVF), 477 to 497 (IPVY…TVFI), and 515 to 535 (LYIF…GLGL).

It belongs to the OXA1/ALB3/YidC family. Type 1 subfamily. As to quaternary structure, interacts with the Sec translocase complex via SecD. Specifically interacts with transmembrane segments of nascent integral membrane proteins during membrane integration.

It localises to the cell inner membrane. Required for the insertion and/or proper folding and/or complex formation of integral membrane proteins into the membrane. Involved in integration of membrane proteins that insert both dependently and independently of the Sec translocase complex, as well as at least some lipoproteins. Aids folding of multispanning membrane proteins. In Chlorobium limicola (strain DSM 245 / NBRC 103803 / 6330), this protein is Membrane protein insertase YidC.